The primary structure comprises 203 residues: Ras-like protein family member 10A (203 aa).

A small GTPase-like region spans residues 1–203 (MGGSLRVAVL…ALHPARCSLM (203 aa)). 11 to 18 (GAPGVGKT) lines the GTP pocket. The short motif at 33-42 (HRPTDGPRLY) is the Effector region element. GTP contacts are provided by residues 59-62 (DGDV) and 129-132 (NKRD). At C200 the chain carries Cysteine methyl ester. A lipid anchor (S-farnesyl cysteine) is attached at C200. The propeptide at 201–203 (SLM) is removed in mature form.

It belongs to the small GTPase superfamily. Ras family. In terms of processing, isoprenylation is essential for nucleolar localization, and the proliferation-inhibiting activity of RASL10A. In terms of tissue distribution, expression appears to be strictly limited to the central nervous system.

It localises to the cell membrane. The protein resides in the nucleus. Its subcellular location is the nucleolus. The enzyme catalyses GTP + H2O = GDP + phosphate + H(+). Its function is as follows. Potent inhibitor of cellular proliferation. This Homo sapiens (Human) protein is Ras-like protein family member 10A (RASL10A).